Here is a 149-residue protein sequence, read N- to C-terminus: Transcriptional repressor NrdR (149 aa).

Residues 3-34 fold into a zinc finger; it reads CPFCDTEETKVIDSRLVSDGYQVRRRRECGHC. Residues 49–139 enclose the ATP-cone domain; sequence PKIIKTDGTR…VYLSFDDIDQ (91 aa).

This sequence belongs to the NrdR family. It depends on Zn(2+) as a cofactor.

Negatively regulates transcription of bacterial ribonucleotide reductase nrd genes and operons by binding to NrdR-boxes. This is Transcriptional repressor NrdR from Haemophilus influenzae (strain PittEE).